Here is a 590-residue protein sequence, read N- to C-terminus: Cell division protein FtsZ 1 (590 aa).

GTP contacts are provided by residues 24 to 28 (GGGGN), 111 to 113 (GTG), Glu142, Arg146, and Asp190. Disordered regions lie at residues 346–372 (AAVP…QPLQ) and 524–590 (EATN…RQSS). Positions 534–546 (AAAPSAASQQRRP) are enriched in low complexity. Basic and acidic residues predominate over residues 559–576 (GQLDDHGRAAPQMRSHED).

This sequence belongs to the FtsZ family. Homodimer. Polymerizes to form a dynamic ring structure in a strictly GTP-dependent manner. Interacts directly with several other division proteins.

It localises to the cytoplasm. Essential cell division protein that forms a contractile ring structure (Z ring) at the future cell division site. The regulation of the ring assembly controls the timing and the location of cell division. One of the functions of the FtsZ ring is to recruit other cell division proteins to the septum to produce a new cell wall between the dividing cells. Binds GTP and shows GTPase activity. The polypeptide is Cell division protein FtsZ 1 (Rhizobium meliloti (strain 1021) (Ensifer meliloti)).